The sequence spans 726 residues: Sensory/regulatory protein RpfC (726 aa).

Helical transmembrane passes span 23–40 (NLIR…LGWR), 52–72 (TWLI…AILL), 95–115 (IMAI…WVTI), 128–148 (AATA…PYWK), and 152–172 (YLSW…DSLL). Residues 195–417 (NMSHEFRTPL…VFWFELPMAI (223 aa)) enclose the Histidine kinase domain. H198 carries the post-translational modification Phosphohistidine; by autocatalysis. Residues 463 to 581 (RMLVADDHEA…KLLDTLADLA (119 aa)) form the Response regulatory domain. D512 bears the 4-aspartylphosphate mark. One can recognise an HPt domain in the interval 618 to 711 (GEEFERQFVR…KAGKDALDAR (94 aa)). H657 is modified (phosphohistidine).

As to quaternary structure, at low DSF concentrations, interacts with RpfF. Autophosphorylated. Activation may require a sequential transfer of a phosphate group from a His in the primary transmitter domain, to an Asp in the receiver domain and to a His in the secondary transmitter domain.

The protein resides in the cell inner membrane. The enzyme catalyses ATP + protein L-histidine = ADP + protein N-phospho-L-histidine.. With respect to regulation, binding of DSF to the sensor region causes allosteric change, which facilitates RpfC autophosphorylation. Its function is as follows. Hybrid sensor kinase that regulates diverse biological functions through two distinct molecular mechanisms. At low cell density, the extracellular concentration of the diffusible signaling factor (DSF) is below a threshold, and unphosphorylated RpfC is involved in the negative regulation of DSF synthesis, via direct interaction with the DSF synthase RpfF. Interaction prevents synthesis of DSF, which remains at a basal level. This activity does not involve the phosphorelay mechanism and is not dependent on RpfG. Is also member of the two-component regulatory system RpfG/RpfC, which is involved in the perception and response to DSF, which is essential for cell-cell signaling. At high cell density, the level of extracellular DSF increases and binding of DSF to the sensor region of RpfC causes autophosphorylation of RpfC, which results in the release of RpfF and the activation of RpfG via a four-step phosphorelay. Activation of RpfG leads to the positive regulation of biofilm dispersal and the production of virulence factors. The sequence is that of Sensory/regulatory protein RpfC (rpfC) from Xanthomonas campestris pv. campestris (strain ATCC 33913 / DSM 3586 / NCPPB 528 / LMG 568 / P 25).